Here is a 181-residue protein sequence, read N- to C-terminus: Small ribosomal subunit protein uS4 (181 aa).

Residues 104-172 (RRLQTIVYKK…SRPPVMSQQE (69 aa)) enclose the S4 RNA-binding domain.

This sequence belongs to the universal ribosomal protein uS4 family. Part of the 30S ribosomal subunit. Contacts protein S5. The interaction surface between S4 and S5 is involved in control of translational fidelity.

In terms of biological role, one of the primary rRNA binding proteins, it binds directly to 16S rRNA where it nucleates assembly of the body of the 30S subunit. Its function is as follows. With S5 and S12 plays an important role in translational accuracy. In Saccharolobus solfataricus (strain ATCC 35092 / DSM 1617 / JCM 11322 / P2) (Sulfolobus solfataricus), this protein is Small ribosomal subunit protein uS4.